Reading from the N-terminus, the 479-residue chain is MTEDNEVQIAGMSIVIVCSVVDPASQNIKEHLLKLRDWVEMSVPGGIFDDLSAVYQSGNFYIIEVTEHHIYQDGIDRKIEEAGLDCDLLIFASKHKSADGRRLLTAHFTGNPGSADFGGYPGELSMAAPFALRCLLRNMAELSESIGFDVSMESTHHGPSDLDVPSVYAEIGSSEVEWVDQDAGDIVARSILSVRSGFCPVGIGFGGGHYAARQSELVLGSDISFGHNFPNYQLQFVDVDMFRKAVERSGADLVYCDRKAMSSDEKKRINELADEFGLDVLRESDIKGMEGVCWDIFRIFWHKVRDEGLSGRVKVPVGLKDKLSENVCDIFDFDVSNVVTVVIDNELLKLVRSVDAGGVKRLLDMSNVVYSERDDATISNHFYTFWNRDAEDFLTFIVDECIKILKGRYDTEYVFEENVLYISDERFSPELARKWGVPSGPMFGELAKGQSVMIEGNTVLPEMVHERTQKSLVLRNVIF.

This sequence belongs to the DtdA deacylase family. As to quaternary structure, monomer. Zn(2+) is required as a cofactor.

It carries out the reaction a D-aminoacyl-tRNA + H2O = a tRNA + a D-alpha-amino acid + H(+). The enzyme catalyses glycyl-tRNA(Ala) + H2O = tRNA(Ala) + glycine + H(+). In terms of biological role, D-aminoacyl-tRNA deacylase with broad substrate specificity. By recycling D-aminoacyl-tRNA to D-amino acids and free tRNA molecules, this enzyme counteracts the toxicity associated with the formation of D-aminoacyl-tRNA entities in vivo. This Methanococcoides burtonii (strain DSM 6242 / NBRC 107633 / OCM 468 / ACE-M) protein is D-aminoacyl-tRNA deacylase.